The primary structure comprises 391 residues: GTPase Obg (391 aa).

An Obg domain is found at 1-159; the sequence is MKFVDEAVVK…REIRLELLLL (159 aa). One can recognise an OBG-type G domain in the interval 160–333; it reads ADVGMLGLPN…LCYKLADFME (174 aa). Residues 166-173, 191-195, 213-216, 283-286, and 314-316 contribute to the GTP site; these read GLPNAGKS, FTTLI, DIPG, NKTD, and SAI. Mg(2+) is bound by residues S173 and T193. The span at 367–383 shows a compositional bias: acidic residues; it reads TEEDDDDWDDCDDEDDD. Positions 367-391 are disordered; it reads TEEDDDDWDDCDDEDDDGHVVYVRD.

The protein belongs to the TRAFAC class OBG-HflX-like GTPase superfamily. OBG GTPase family. As to quaternary structure, monomer. The cofactor is Mg(2+).

The protein resides in the cytoplasm. Functionally, an essential GTPase which binds GTP, GDP and possibly (p)ppGpp with moderate affinity, with high nucleotide exchange rates and a fairly low GTP hydrolysis rate. Plays a role in control of the cell cycle, stress response, ribosome biogenesis and in those bacteria that undergo differentiation, in morphogenesis control. The chain is GTPase Obg from Vibrio campbellii (strain ATCC BAA-1116).